The sequence spans 183 residues: Cell division protein SepF (183 aa).

Residues 149–183 are disordered; the sequence is SSEESAAPSVMAREEEATAPAAPSPAWGTQDAING.

The protein belongs to the SepF family. Homodimer. Interacts with FtsZ.

It is found in the cytoplasm. Its function is as follows. Cell division protein that is part of the divisome complex and is recruited early to the Z-ring. Probably stimulates Z-ring formation, perhaps through the cross-linking of FtsZ protofilaments. Its function overlaps with FtsA. This is Cell division protein SepF from Synechococcus sp. (strain RCC307).